A 162-amino-acid polypeptide reads, in one-letter code: MKVRILTVGNKMPKWVQTGFDEYHKRIQPMLNTEIVEIAAAKRAKNPSDANLAQYREQEGQAILAAHAAAGREQLWVLDVKGKMLSTENLADKLADGMQQGDDIALVIGGADGVSPEVLAKADVKWSLSALTLPHPLVRVVLMEQLYRAMSINHNHPYHRGN.

S-adenosyl-L-methionine-binding positions include Leu-78, Gly-109, and Leu-128–Leu-133.

The protein belongs to the RNA methyltransferase RlmH family. Homodimer.

The protein resides in the cytoplasm. It carries out the reaction pseudouridine(1915) in 23S rRNA + S-adenosyl-L-methionine = N(3)-methylpseudouridine(1915) in 23S rRNA + S-adenosyl-L-homocysteine + H(+). Functionally, specifically methylates the pseudouridine at position 1915 (m3Psi1915) in 23S rRNA. The polypeptide is Ribosomal RNA large subunit methyltransferase H (Psychrobacter arcticus (strain DSM 17307 / VKM B-2377 / 273-4)).